Here is a 499-residue protein sequence, read N- to C-terminus: Probable mitochondrial-processing peptidase subunit alpha-2, chloroplastic/mitochondrial (499 aa).

This sequence belongs to the peptidase M16 family. As to quaternary structure, heterodimer of alpha and beta subunits, forming the mitochondrial processing protease (MPP) in which subunit alpha is involved in substrate recognition and binding and subunit beta is the catalytic subunit. Component of the ubiquinol-cytochrome c oxidoreductase (cytochrome b-c1 complex, complex III, CIII), a multisubunit enzyme composed of 10 subunits. The complex is composed of 3 respiratory subunits cytochrome b (MT-CYB), cytochrome c1 (CYC1-1 or CYC1-2) and Rieske protein (UCR1-1 or UCR1-2), 2 core protein subunits MPPalpha1 (or MPPalpha2) and MPPB, and 5 low-molecular weight protein subunits QCR7-1 (or QCR7-2), UCRQ-1 (or UCRQ-2), QCR9, UCRY and probably QCR6-1 (or QCR6-2). The complex exists as an obligatory dimer and forms supercomplexes (SCs) in the inner mitochondrial membrane with NADH-ubiquinone oxidoreductase (complex I, CI), resulting in different assemblies (supercomplexes SCI(1)III(2) and SCI(2)III(4)). Interacts with TIM23-2.

It is found in the plastid. The protein localises to the chloroplast stroma. Its subcellular location is the mitochondrion matrix. The protein resides in the mitochondrion inner membrane. Functionally, substrate recognition and binding subunit of the essential mitochondrial processing protease (MPP), which cleaves the mitochondrial sequence off newly imported precursors proteins. Component of the ubiquinol-cytochrome c oxidoreductase, a multisubunit transmembrane complex that is part of the mitochondrial electron transport chain which drives oxidative phosphorylation. The respiratory chain contains 3 multisubunit complexes succinate dehydrogenase (complex II, CII), ubiquinol-cytochrome c oxidoreductase (cytochrome b-c1 complex, complex III, CIII) and cytochrome c oxidase (complex IV, CIV), that cooperate to transfer electrons derived from NADH and succinate to molecular oxygen, creating an electrochemical gradient over the inner membrane that drives transmembrane transport and the ATP synthase. The cytochrome b-c1 complex catalyzes electron transfer from ubiquinol to cytochrome c, linking this redox reaction to translocation of protons across the mitochondrial inner membrane, with protons being carried across the membrane as hydrogens on the quinol. In the process called Q cycle, 2 protons are consumed from the matrix, 4 protons are released into the intermembrane space and 2 electrons are passed to cytochrome c. The protein is Probable mitochondrial-processing peptidase subunit alpha-2, chloroplastic/mitochondrial (MPPalpha2) of Arabidopsis thaliana (Mouse-ear cress).